A 556-amino-acid polypeptide reads, in one-letter code: Formate--tetrahydrofolate ligase (556 aa).

Position 65-72 (65-72) interacts with ATP; it reads TPAGEGKT.

Belongs to the formate--tetrahydrofolate ligase family.

It catalyses the reaction (6S)-5,6,7,8-tetrahydrofolate + formate + ATP = (6R)-10-formyltetrahydrofolate + ADP + phosphate. It functions in the pathway one-carbon metabolism; tetrahydrofolate interconversion. The polypeptide is Formate--tetrahydrofolate ligase (Ruminiclostridium cellulolyticum (strain ATCC 35319 / DSM 5812 / JCM 6584 / H10) (Clostridium cellulolyticum)).